Here is a 391-residue protein sequence, read N- to C-terminus: uncharacterized protein (391 aa).

A run of 11 helical transmembrane segments spans residues 15 to 35 (LSFC…LPIL), 48 to 68 (FLIG…QIPF), 81 to 101 (IIFG…TNSI), 139 to 159 (IIGV…PIIA), 167 to 187 (IFWI…FLIP), 217 to 237 (FYLG…IIPY), 251 to 271 (IVYF…VFYF), 275 to 295 (FFLK…LLLF), 303 to 323 (ICLT…EIFF), 346 to 366 (TSQF…CTFF), and 369 to 389 (NHIF…SFFC).

It belongs to the major facilitator superfamily.

It localises to the cell membrane. This is an uncharacterized protein from Buchnera aphidicola subsp. Schizaphis graminum (strain Sg).